Consider the following 309-residue polypeptide: Mitochondrial succinate-fumarate transporter 1 (309 aa).

3 Solcar repeats span residues 11 to 96 (IPPY…FQTA), 108 to 196 (RGRF…FDIL), and 208 to 298 (LQPW…VTGL). The next 6 helical transmembrane spans lie at 17 to 37 (AVSG…IDVI), 65 to 85 (VRAL…KYTL), 111 to 131 (FLSG…PFEV), 171 to 191 (GAAP…TAKN), 214 to 234 (MISG…FDVV), and 273 to 293 (GLLP…AVAD).

The protein belongs to the mitochondrial carrier (TC 2.A.29) family. As to expression, expressed in root tips, cotyledons, hypocotyls, leaves, trichomes, stems, flowers, carpels, anthers, pollen and abscission zone of siliques.

It localises to the mitochondrion inner membrane. Functionally, may transport cytoplasmic succinate, derived from fatty acid oxidation, into the mitochondrial matrix in exchange of fumarate during lipid mobilization in seed germination. Conversion of seed-reserved triacylglycerols into sucrose is necessary for growth before the onset of photosynthesis and involves fatty acid beta-oxidation, the glyoxylate cycle and gluconeogenesis. This is Mitochondrial succinate-fumarate transporter 1 (SFC1) from Arabidopsis thaliana (Mouse-ear cress).